A 286-amino-acid polypeptide reads, in one-letter code: B3 domain-containing protein REM20 (286 aa).

Residues 9–102 constitute a DNA-binding region (TF-B3); the sequence is PRFFKVFLVE…TFEVSVFDRW (94 aa). The tract at residues 117–161 is disordered; it reads SDSDSDSVVEDEKDSTDVVEDDDDEDEDEDEDDDGSFDEDEEISQ. The segment covering 119–159 has biased composition (acidic residues); it reads SDSDSVVEDEKDSTDVVEDDDDEDEDEDEDDDGSFDEDEEI.

It is found in the nucleus. The chain is B3 domain-containing protein REM20 (REM20) from Arabidopsis thaliana (Mouse-ear cress).